Here is a 292-residue protein sequence, read N- to C-terminus: Probable porphobilinogen deaminase (292 aa).

An S-(dipyrrolylmethanemethyl)cysteine modification is found at cysteine 233.

It belongs to the HMBS family. It depends on dipyrromethane as a cofactor.

The catalysed reaction is 4 porphobilinogen + H2O = hydroxymethylbilane + 4 NH4(+). It functions in the pathway porphyrin-containing compound metabolism; protoporphyrin-IX biosynthesis; coproporphyrinogen-III from 5-aminolevulinate: step 2/4. Its function is as follows. Tetrapolymerization of the monopyrrole PBG into the hydroxymethylbilane pre-uroporphyrinogen in several discrete steps. This Methanocaldococcus jannaschii (strain ATCC 43067 / DSM 2661 / JAL-1 / JCM 10045 / NBRC 100440) (Methanococcus jannaschii) protein is Probable porphobilinogen deaminase (hemC).